Here is an 842-residue protein sequence, read N- to C-terminus: ATP-binding cassette sub-family B member 6 (842 aa).

Topologically, residues 1–26 (MVTVGNYCETEGPAGPAWTQNGLSPC) are lumenal. The tract at residues 1-205 (MVTVGNYCET…SGGLFILGLW (205 aa)) is required for the lysosomal targeting. Residues 1–236 (MVTVGNYCET…GNQGRSTDRR (236 aa)) form a required for ATPase activity region. A disulfide bond links Cys8 and Cys26. A helical membrane pass occupies residues 27–47 (FFFTLVPSTLLTLGVLALVLV). The Cytoplasmic portion of the chain corresponds to 48–72 (LPRRRREVPAGPEELSWAAGPRVAP). A helical membrane pass occupies residues 73-93 (YVLQLFLATLQMALPLAGLAG). Topologically, residues 94–106 (RVGTARGVRLPGY) are lumenal. A helical transmembrane segment spans residues 107-127 (LLLASVLESLASVCGLWLLVV). The Cytoplasmic segment spans residues 128–147 (ERSQARQSLAMGVWMKFRHS). The chain crosses the membrane as a helical span at residues 148 to 168 (LGLLLLWTVTFAAENLALVSW). Topologically, residues 169–185 (NSPQWWWARADLGQQVQ) are lumenal. The chain crosses the membrane as a helical span at residues 186 to 206 (FGLWVLRYVTSGGLFILGLWA). The Cytoplasmic segment spans residues 207–263 (PGLRPQSYTLHVHEEDQDVGGNQGRSTDRRSTWRDLGRKLRLLSSYLWPRGSPSLQL). Residues 264–284 (IVLICLGLMGLERALNVLVPI) form a helical membrane-spanning segment. The ABC transmembrane type-1 domain occupies 265–556 (VLICLGLMGL…FGTYYRMIQT (292 aa)). Residues 285–291 (FYRDIVN) lie on the Lumenal side of the membrane. Residues 292–312 (LLTAKAPWSSLAWTVTTYVFL) traverse the membrane as a helical segment. The Cytoplasmic segment spans residues 313 to 375 (KFLQGGGTGS…TGEVLRIVDR (63 aa)). The chain crosses the membrane as a helical span at residues 376–396 (GTSSVTGLLSYLVFSIIPTLA). Residue Asp397 is a topological domain, lumenal. The chain crosses the membrane as a helical span at residues 398–418 (IIIGIIYFSMFFNAWFGLIVF). The Cytoplasmic portion of the chain corresponds to 419 to 499 (LCMSLYLILT…STASLVVLNQ (81 aa)). A helical membrane pass occupies residues 500–520 (TQNLVIGLGLLAGSLLCAYFV). The Lumenal segment spans residues 521–529 (SEQKLQVGD). The chain crosses the membrane as a helical span at residues 530–550 (FVLFGTYITQLYMPLNWFGTY). At 551-842 (YRMIQTNFID…PEESKPQDTA (292 aa)) the chain is on the cytoplasmic side. The region spanning 590–824 (IEFENVHFSY…GGVYAEMWQL (235 aa)) is the ABC transporter domain. Residues Tyr599 and 623-634 (GPSGAGKSTILR) each bind ATP.

It belongs to the ABC transporter superfamily. ABCB family. Heavy Metal importer (TC 3.A.1.210) subfamily. As to quaternary structure, homodimer. N-glycosylated.

The protein localises to the cell membrane. It is found in the mitochondrion outer membrane. The protein resides in the endoplasmic reticulum membrane. It localises to the golgi apparatus membrane. Its subcellular location is the endosome membrane. The protein localises to the lysosome membrane. It is found in the late endosome membrane. The protein resides in the early endosome membrane. It localises to the secreted. Its subcellular location is the extracellular exosome. The protein localises to the mitochondrion. It is found in the endosome. The protein resides in the multivesicular body membrane. It localises to the melanosome membrane. It carries out the reaction coproporphyrin III(in) + ATP + H2O = coproporphyrin III(out) + ADP + phosphate + H(+). The catalysed reaction is coproporphyrinogen III(in) + ATP + H2O = coproporphyrinogen III(out) + ADP + phosphate + H(+). The enzyme catalyses heme b(in) + ATP + H2O = heme b(out) + ADP + phosphate + H(+). It catalyses the reaction pheophorbide a(in) + ATP + H2O = pheophorbide a(out) + ADP + phosphate + H(+). It carries out the reaction protoporphyrin IX(in) + ATP + H2O = protoporphyrin IX(out) + ADP + phosphate + H(+). The catalysed reaction is coproporphyrin I(in) + ATP + H2O = coproporphyrin I(out) + ADP + phosphate + H(+). The enzyme catalyses uroporphyrin I(in) + ATP + H2O = uroporphyrin I(out) + ADP + phosphate + H(+). It catalyses the reaction uroporphyrin III(in) + ATP + H2O = uroporphyrin III(out) + ADP + phosphate + H(+). Its function is as follows. ATP-dependent transporter that catalyzes the transport of a broad-spectrum of porphyrins from the cytoplasm to the extracellular space through the plasma membrane or into the vesicle lumen. May also function as an ATP-dependent importer of porphyrins from the cytoplasm into the mitochondria, in turn may participate in the de novo heme biosynthesis regulation and in the coordination of heme and iron homeostasis during phenylhydrazine stress. May play a key role in the early steps of melanogenesis producing PMEL amyloid fibrils. In vitro, it confers to cells a resistance to toxic metal such as arsenic and cadmium and against chemotherapeutics agent such as 5-fluorouracil, SN-38 and vincristin. In addition may play a role in the transition metal homeostasis. In Mus musculus (Mouse), this protein is ATP-binding cassette sub-family B member 6.